The primary structure comprises 373 residues: MDRVVFFFLIAATLLAGSLGSTVISGEVTDGFVNPIRQVVPEENDEQLLNAEHHFTLFKSKYEKTYATQVEHDHRFRVFKANLRRARRNQLLDPSAVHGVTQFSDLTPKEFRRKFLGLKRRGFRLPTDTQTAPILPTSDLPTEFDWREQGAVTPVKNQGMCGSCWSFSAIGALEGAHFLATKELVSLSEQQLVDCDHECDPAQANSCDSGCSGGLMNNAFEYALKAGGLMKEEDYPYTGRDHTACKFDKSKIVASVSNFSVVSSDEDQIAANLVQHGPLAIAINAMWMQTYIGGVSCPYVCSKSQDHGVLLVGFGSSGYAPIRLKEKPYWIIKNSWGAMWGEHGYYKICRGPHNMCGMDTMVSTVAAVHTSPK.

A signal peptide spans 1 to 20 (MDRVVFFFLIAATLLAGSLG). Residues 21–139 (STVISGEVTD…QTAPILPTSD (119 aa)) constitute a propeptide, activation peptide. 2 disulfides stabilise this stretch: Cys161-Cys211 and Cys195-Cys245. The active site involves Cys164. A glycan (N-linked (GlcNAc...) asparagine) is linked at Asn258. A disulfide bridge links Cys301 with Cys356. Active-site residues include His307 and Asn334.

This sequence belongs to the peptidase C1 family.

The protein resides in the lytic vacuole. In terms of biological role, probable thiol protease. In Arabidopsis thaliana (Mouse-ear cress), this protein is Probable cysteine protease RD19C.